A 121-amino-acid polypeptide reads, in one-letter code: Small ribosomal subunit protein bS6 (121 aa).

Residues 96 to 121 (DTGPSSMMKTVEREDARKTQQAEYQA) are disordered. Positions 105–115 (TVEREDARKTQ) are enriched in basic and acidic residues.

This sequence belongs to the bacterial ribosomal protein bS6 family.

Binds together with bS18 to 16S ribosomal RNA. The chain is Small ribosomal subunit protein bS6 from Albidiferax ferrireducens (strain ATCC BAA-621 / DSM 15236 / T118) (Rhodoferax ferrireducens).